We begin with the raw amino-acid sequence, 56 residues long: Large ribosomal subunit protein eL37 (56 aa).

4 residues coordinate Zn(2+): Cys19, Cys22, Cys34, and Cys37. Residues 19–37 (CRRCGSVSLNIHTKQCTSC) form a C4-type zinc finger.

The protein belongs to the eukaryotic ribosomal protein eL37 family. Zn(2+) serves as cofactor.

Functionally, binds to the 23S rRNA. This Methanococcoides burtonii (strain DSM 6242 / NBRC 107633 / OCM 468 / ACE-M) protein is Large ribosomal subunit protein eL37.